A 252-amino-acid chain; its full sequence is 5'-nucleotidase SurE (252 aa).

The a divalent metal cation site is built by D8, D9, S40, and N92.

This sequence belongs to the SurE nucleotidase family. A divalent metal cation serves as cofactor.

It localises to the cytoplasm. It carries out the reaction a ribonucleoside 5'-phosphate + H2O = a ribonucleoside + phosphate. Functionally, nucleotidase that shows phosphatase activity on nucleoside 5'-monophosphates. This chain is 5'-nucleotidase SurE, found in Chelativorans sp. (strain BNC1).